Here is a 327-residue protein sequence, read N- to C-terminus: G protein pathway suppressor 2 (327 aa).

A coiled-coil region spans residues 14–109 (MARALHRHIM…RRRKEQSDLT (96 aa)). Residues 26–65 (RERKRQEEEEVDKMMEQKMKEEQERRKKKEMEERMSLEET) form a disordered region. Residues K45 and K71 each participate in a glycyl lysine isopeptide (Lys-Gly) (interchain with G-Cter in SUMO1) cross-link. An interaction with SUMO region spans residues 61-94 (SLEETKEQILKLEEKLLALQEEKHQLFLQLKKVL). Disordered stretches follow at residues 177-208 (HGQF…SPSQ) and 253-327 (QKQM…FYHK). Polar residues predominate over residues 253–271 (QKQMEHANQQTGFSDSSSL). Residue R312 is modified to Asymmetric dimethylarginine. Residues 317–327 (QHSQNPRFYHK) are compositionally biased toward polar residues. R323 is subject to Asymmetric dimethylarginine; alternate. An Omega-N-methylarginine; alternate modification is found at R323.

Component of the N-Cor repressor complex, at least composed of NCOR1, NCOR2, HDAC3, TBL1X, TBL1R, CORO2A and GPS2. Interacts (when sumoylated at Lys-71) with TBL1X; leading to protect GPS2 from degradation by the proteasome. Interacts with UBE2N; leading to inhibit UBE2N/Ubc13 activity. Interacts with TRAF1. Interacts with TRAF2. Interacts with TRAF6. Interacts with PPARG (when in the liganded conformation). Interacts with (sumoylated) NR1H2; interaction with sumoylated NR1H2 and NR5A2 onto hepatic acute phase protein promoters prevents N-Cor corepressor complex dissociation. Interacts with (sumoylated) NR5A2; interaction with sumoylated NR1H2 and NR5A2 onto hepatic acute phase protein promoters prevents N-Cor corepressor complex dissociation. Interacts with NR1H3. Interacts with RFX4. Interacts with ANKRD26. In terms of assembly, (Microbial infection) Interacts (via coiled coil domain) with hepatitis C virus (HCV) NS5A. Post-translationally, sumoylation regulates its subcellular location. Sumoylation at Lys-45 and Lys-71 regulates the shuttling between the cytoplasm and the nucleus. Sumoylation at Lys-71 is required for interaction with TBL1X. Sumoylated at Lys-45 and Lys-71 in mitochondrion. Desumoylation by SENP1 leads to relocation from the mitochondria to the nucleus. Ubiquitinated at the C-terminus by SIAH2; leading to its degradation by the proteasome. Interaction with TBL1X and methylation at Arg-323 protect GPS2 against ubiquitination and degradation. In terms of processing, methylated at Arg-312 and Arg-323 by PRMT6. Methylation at Arg-323 protects from degradation by the proteasome. Widely expressed.

Its subcellular location is the nucleus. The protein resides in the mitochondrion. The protein localises to the cytoplasm. It is found in the cytosol. Functionally, key regulator of inflammation, lipid metabolism and mitochondrion homeostasis that acts by inhibiting the activity of the ubiquitin-conjugating enzyme UBE2N/Ubc13, thereby inhibiting 'Lys-63'-linked ubiquitination. In the nucleus, can both acts as a corepressor and coactivator of transcription, depending on the context. Acts as a transcription coactivator in adipocytes by promoting the recruitment of PPARG to promoters: acts by inhibiting the activity of the ubiquitin-conjugating enzyme UBE2N/Ubc13, leading to stabilization of KDM4A and subsequent histone H3 'Lys-9' (H3K9) demethylation. Promotes cholesterol efflux by acting as a transcription coactivator. Acts as a regulator of B-cell development by inhibiting UBE2N/Ubc13, thereby restricting the activation of Toll-like receptors (TLRs) and B-cell antigen receptors (BCRs) signaling pathways. Acts as a key mediator of mitochondrial stress response: in response to mitochondrial depolarization, relocates from the mitochondria to the nucleus following desumoylation and specifically promotes expression of nuclear-encoded mitochondrial genes. Promotes transcription of nuclear-encoded mitochondrial genes by inhibiting UBE2N/Ubc13. Can also act as a corepressor as part of the N-Cor repressor complex by repressing active PPARG. Plays an anti-inflammatory role in macrophages and is required for insulin sensitivity by acting as a corepressor. Plays an anti-inflammatory role during the hepatic acute phase response by interacting with sumoylated NR1H2 and NR5A2 proteins, thereby preventing N-Cor corepressor complex dissociation. In the cytosol, also plays a non-transcriptional role by regulating insulin signaling and pro-inflammatory pathways. In the cytoplasm, acts as a negative regulator of inflammation by inhibiting the pro-inflammatory TNF-alpha pathway; acts by repressing UBE2N/Ubc13 activity. In the cytoplasm of adipocytes, restricts the activation of insulin signaling via inhibition of UBE2N/Ubc13-mediated ubiquitination of AKT. Able to suppress G-protein- and mitogen-activated protein kinase-mediated signal transduction. Acts as a tumor-suppressor in liposarcoma. In terms of biological role, (Microbial infection) Required for efficient replication of hepatitis C virus (HCV) by promoting the interaction between VAPA and HCV virus protein NS5A. This is G protein pathway suppressor 2 from Homo sapiens (Human).